The primary structure comprises 329 residues: DNA-directed RNA polymerase subunit alpha (329 aa).

An alpha N-terminal domain (alpha-NTD) region spans residues 1-235; that stretch reads MQGFVEDFLK…QQLEAFVDLR (235 aa). An alpha C-terminal domain (alpha-CTD) region spans residues 249 to 329; the sequence is FEPVLLRPVD…NWPPKSLLED (81 aa).

It belongs to the RNA polymerase alpha chain family. As to quaternary structure, homodimer. The RNAP catalytic core consists of 2 alpha, 1 beta, 1 beta' and 1 omega subunit. When a sigma factor is associated with the core the holoenzyme is formed, which can initiate transcription.

The catalysed reaction is RNA(n) + a ribonucleoside 5'-triphosphate = RNA(n+1) + diphosphate. DNA-dependent RNA polymerase catalyzes the transcription of DNA into RNA using the four ribonucleoside triphosphates as substrates. The chain is DNA-directed RNA polymerase subunit alpha from Buchnera aphidicola subsp. Cinara cedri (strain Cc).